We begin with the raw amino-acid sequence, 465 residues long: Branched-chain amino acid permease BcaP (465 aa).

13 helical membrane passes run 35 to 55 (LLGI…TGAV), 57 to 77 (AGPG…FAAL), 103 to 123 (LMAF…VSAV), 133 to 153 (SFLS…PGAV), 159 to 179 (LFNL…YLGI), 188 to 208 (IMVI…AVYV), 216 to 236 (FMPM…FAFI), 258 to 278 (GIIF…AIMT), 305 to 325 (VAGI…LVML), 355 to 375 (PYVA…LVPL), 380 to 400 (KLVN…VIVL), 413 to 432 (CPGV…FLIL), and 437 to 456 (VTIV…YFLY).

This sequence belongs to the amino acid-polyamine-organocation (APC) superfamily.

It localises to the cell membrane. With respect to regulation, isoleucine uptake is efficiently reduced in the presence of 100-fold excess valine, leucine, alanine, threonine, serine, cysteine, asparagine, and a nonproteinaceous amino acid 4-azaleucine. Functionally, branched-chain amino acid transport system which is involved in the uptake of isoleucine, valine and probably leucine. Can also transport threonine, and is active as a minor serine permease. May be an amino acid permease of rather broad specificity, because several amino acids, albeit at 100-fold excess, are able to prevent isoleucine uptake. Probably does not transport methionine. Together with BraB and BrnQ, plays an important role in the activation of CodY, a branched-chain amino acid-responsive transcriptional regulator that controls the expression of several dozen transcription units in B.subtilis. This is Branched-chain amino acid permease BcaP from Bacillus subtilis (strain 168).